We begin with the raw amino-acid sequence, 322 residues long: Ribosomal RNA small subunit methyltransferase H (322 aa).

S-adenosyl-L-methionine is bound by residues 47 to 49 (GGH), D67, F93, D112, and Q119.

It belongs to the methyltransferase superfamily. RsmH family.

The protein localises to the cytoplasm. It carries out the reaction cytidine(1402) in 16S rRNA + S-adenosyl-L-methionine = N(4)-methylcytidine(1402) in 16S rRNA + S-adenosyl-L-homocysteine + H(+). Specifically methylates the N4 position of cytidine in position 1402 (C1402) of 16S rRNA. This chain is Ribosomal RNA small subunit methyltransferase H, found in Stenotrophomonas maltophilia (strain R551-3).